We begin with the raw amino-acid sequence, 1208 residues long: Lysine-specific demethylase JMJ17 (1208 aa).

The segment at 1–36 (MLLCDSCNKGWHIYCLSPPLKHIPLGNWYCLECLNT) adopts a PHD-type 1; degenerate zinc-finger fold. The Zn(2+) site is built by cysteine 4, cysteine 7, cysteine 30, and cysteine 33. The region spanning 126–292 (EYCGSPWNLN…YGGSGAELYR (167 aa)) is the JmjC domain. Residues histidine 172, glutamate 174, and histidine 260 each contribute to the Fe cation site. Residues cysteine 369, cysteine 372, cysteine 383, cysteine 385, cysteine 392, histidine 395, cysteine 400, and cysteine 402 each contribute to the Zn(2+) site. The C5HC2 zinc-finger motif lies at 369 to 421 (CIICQQFLHLSAIVCNCRPSVFACLEHWKHLCECEPTKLRLEYRYTLAELDMM). Residues 613–620 (SKKISSAK) carry the Nuclear localization signal motif. The PHD-type 2 zinc-finger motif lies at 1099 to 1145 (MLHCICLKPYNSRSMVSCSQCGEWYHTYCLKLHWRPKAYVCSACCPL). Zn(2+) contacts are provided by cysteine 1102, cysteine 1104, cysteine 1116, cysteine 1119, histidine 1124, cysteine 1127, cysteine 1139, and cysteine 1142.

The protein belongs to the JARID1 histone demethylase family. The cofactor is Fe(2+). In terms of tissue distribution, expressed in inflorescences, roots, seedlings and siliques, and, at low levels, in leaves and stems.

It localises to the nucleus. The enzyme catalyses N(6),N(6),N(6)-trimethyl-L-lysyl(4)-[histone H3] + 2-oxoglutarate + O2 = N(6),N(6)-dimethyl-L-lysyl(4)-[histone H3] + formaldehyde + succinate + CO2. It carries out the reaction N(6),N(6)-dimethyl-L-lysyl(4)-[histone H3] + 2-oxoglutarate + O2 = N(6)-methyl-L-lysyl(4)-[histone H3] + formaldehyde + succinate + CO2. The catalysed reaction is N(6)-methyl-L-lysyl(4)-[histone H3] + 2-oxoglutarate + O2 = L-lysyl(4)-[histone H3] + formaldehyde + succinate + CO2. It catalyses the reaction N(6),N(6),N(6)-trimethyl-L-lysyl(4)-[histone H3] + 3 2-oxoglutarate + 3 O2 = L-lysyl(4)-[histone H3] + 3 formaldehyde + 3 succinate + 3 CO2. In terms of biological role, functions as a histone H3 'Lys-4' (H3K4me) demethylase involved in the regulation of gene expression. Active on H3K4me1, H3K4me2 and H3K4me3. Repressor of the abscisic acid (ABA) signaling pathway, especially during stomatal closure regulation. Negative regulator of responses to dehydration stress by binding directly to the chromatin of SRK2E/OST1 and demethylating H3K4me3 to regulates its expression. Together with JMJ14 and JMJ16, required for plant growth and development. This chain is Lysine-specific demethylase JMJ17, found in Arabidopsis thaliana (Mouse-ear cress).